The chain runs to 133 residues: ATP synthase epsilon chain (133 aa).

The tract at residues 81–110 (AAERPEQIDTERARKAKERAEQRLASEHVD) is disordered.

This sequence belongs to the ATPase epsilon chain family. F-type ATPases have 2 components, CF(1) - the catalytic core - and CF(0) - the membrane proton channel. CF(1) has five subunits: alpha(3), beta(3), gamma(1), delta(1), epsilon(1). CF(0) has three main subunits: a, b and c.

Its subcellular location is the cell membrane. Produces ATP from ADP in the presence of a proton gradient across the membrane. The polypeptide is ATP synthase epsilon chain (Shouchella clausii (strain KSM-K16) (Alkalihalobacillus clausii)).